A 67-amino-acid chain; its full sequence is Prokaryotic ubiquitin-like protein Pup (67 aa).

Residues 1-11 (MAGQEQQQPQS) show a composition bias toward low complexity. Residues 1 to 47 (MAGQEQQQPQSRESEFEDDAPATPPAPGEAQASAATQGVDDLLDEID) form a disordered region. The interval 25–61 (PAPGEAQASAATQGVDDLLDEIDGVLESNAEEFVRAF) is ARC ATPase binding. Gln67 is subject to Deamidated glutamine. An Isoglutamyl lysine isopeptide (Gln-Lys) (interchain with K-? in acceptor proteins) cross-link involves residue Gln67.

The protein belongs to the prokaryotic ubiquitin-like protein family. Strongly interacts with the proteasome-associated ATPase ARC through a hydrophobic interface; the interacting region of Pup lies in its C-terminal half. There is one Pup binding site per ARC hexamer ring. Post-translationally, is modified by deamidation of its C-terminal glutamine to glutamate by the deamidase Dop, a prerequisite to the subsequent pupylation process.

The protein operates within protein degradation; proteasomal Pup-dependent pathway. In terms of biological role, protein modifier that is covalently attached to lysine residues of substrate proteins, thereby targeting them for proteasomal degradation. The tagging system is termed pupylation. This Arthrobacter sp. (strain FB24) protein is Prokaryotic ubiquitin-like protein Pup.